Reading from the N-terminus, the 354-residue chain is Phosphatidylserine decarboxylase proenzyme (354 aa).

The helical transmembrane segment at Tyr-18–Tyr-36 threads the bilayer. Residues Asp-139, His-198, and Ser-308 each act as charge relay system; for autoendoproteolytic cleavage activity in the active site. Ser-308 acts as the Schiff-base intermediate with substrate; via pyruvic acid; for decarboxylase activity in catalysis. At Ser-308 the chain carries Pyruvic acid (Ser); by autocatalysis.

This sequence belongs to the phosphatidylserine decarboxylase family. PSD-B subfamily. Eukaryotic type I sub-subfamily. As to quaternary structure, heterodimer of a large membrane-associated beta subunit and a small pyruvoyl-containing alpha subunit. Pyruvate is required as a cofactor. Post-translationally, is synthesized initially as an inactive proenzyme. Formation of the active enzyme involves a self-maturation process in which the active site pyruvoyl group is generated from an internal serine residue via an autocatalytic post-translational modification. Two non-identical subunits are generated from the proenzyme in this reaction, and the pyruvate is formed at the N-terminus of the alpha chain, which is derived from the carboxyl end of the proenzyme. The autoendoproteolytic cleavage occurs by a canonical serine protease mechanism, in which the side chain hydroxyl group of the serine supplies its oxygen atom to form the C-terminus of the beta chain, while the remainder of the serine residue undergoes an oxidative deamination to produce ammonia and the pyruvoyl prosthetic group on the alpha chain. During this reaction, the Ser that is part of the protease active site of the proenzyme becomes the pyruvoyl prosthetic group, which constitutes an essential element of the active site of the mature decarboxylase.

It localises to the membrane. It is found in the endoplasmic reticulum membrane. The enzyme catalyses a 1,2-diacyl-sn-glycero-3-phospho-L-serine + H(+) = a 1,2-diacyl-sn-glycero-3-phosphoethanolamine + CO2. The protein operates within phospholipid metabolism; phosphatidylethanolamine biosynthesis; phosphatidylethanolamine from CDP-diacylglycerol: step 2/2. Protease activity is inhibited by PMSF. Its function is as follows. Catalyzes the formation of phosphatidylethanolamine (PtdEtn) from phosphatidylserine (PtdSer). Plays a central role in phospholipid metabolism and in the interorganelle trafficking of phosphatidylserine. The sequence is that of Phosphatidylserine decarboxylase proenzyme from Plasmodium knowlesi (strain H).